A 476-amino-acid chain; its full sequence is Aspartyl/glutamyl-tRNA(Asn/Gln) amidotransferase subunit B (476 aa).

This sequence belongs to the GatB/GatE family. GatB subfamily. In terms of assembly, heterotrimer of A, B and C subunits.

The catalysed reaction is L-glutamyl-tRNA(Gln) + L-glutamine + ATP + H2O = L-glutaminyl-tRNA(Gln) + L-glutamate + ADP + phosphate + H(+). It catalyses the reaction L-aspartyl-tRNA(Asn) + L-glutamine + ATP + H2O = L-asparaginyl-tRNA(Asn) + L-glutamate + ADP + phosphate + 2 H(+). Its function is as follows. Allows the formation of correctly charged Asn-tRNA(Asn) or Gln-tRNA(Gln) through the transamidation of misacylated Asp-tRNA(Asn) or Glu-tRNA(Gln) in organisms which lack either or both of asparaginyl-tRNA or glutaminyl-tRNA synthetases. The reaction takes place in the presence of glutamine and ATP through an activated phospho-Asp-tRNA(Asn) or phospho-Glu-tRNA(Gln). This Lactobacillus acidophilus (strain ATCC 700396 / NCK56 / N2 / NCFM) protein is Aspartyl/glutamyl-tRNA(Asn/Gln) amidotransferase subunit B.